The chain runs to 110 residues: Carboxysome shell protein CsoS1B (110 aa).

The BMC domain maps to 8 to 93; it reads ALGMIETRGL…VHSEVEIILP (86 aa).

The protein belongs to the bacterial microcompartments protein family. CsoS1 subfamily. As to quaternary structure, homohexamer with a small central pore. Interacts with the N-terminus (residues 1-136) of RuBisCO (CbbL).

It is found in the carboxysome. In terms of biological role, one of shell proteins of the carboxysome, a polyhedral inclusion where RuBisCO (ribulose bisphosphate carboxylase, ccbL-ccbS) is sequestered. Assembles into hexamers which make sheets that form the facets of the polyhedral carboxysome. The shell probably limits the diffusion of CO(2) into and out of the carboxysome. There are estimated to be 540 CsoS1B proteins per carboxysome. Functionally, unlike beta-carboxysomes, alpha-carboxysomes (Cb) can form without cargo protein. CsoS2 is essential for Cb formation and is also capable of targeting foreign proteins to the Cb. The Cb shell assembles with the aid of CsoS2; CsoS1A, CsoS1B and CsoS1C form the majority of the shell while CsoS4A and CsoS4B form vertices. CsoS1D forms pseudohexamers that probably control metabolite flux into and out of the shell. The polypeptide is Carboxysome shell protein CsoS1B (Halothiobacillus neapolitanus (strain ATCC 23641 / c2) (Thiobacillus neapolitanus)).